The primary structure comprises 328 residues: L-lactate dehydrogenase (328 aa).

NAD(+)-binding positions include Val18, Glu39, Lys46, Tyr71, and 85-86 (GA). Positions 88 and 94 each coordinate substrate. NAD(+) contacts are provided by residues Ser107, 124–126 (AAN), and Ser149. Position 126-129 (126-129 (NPVD)) interacts with substrate. 154 to 157 (DSAR) lines the substrate pocket. Residues Arg159 and His174 each coordinate beta-D-fructose 1,6-bisphosphate. Catalysis depends on His181, which acts as the Proton acceptor. Residue Tyr226 is modified to Phosphotyrosine. Thr235 contacts substrate.

The protein belongs to the LDH/MDH superfamily. LDH family. Homotetramer.

The protein resides in the cytoplasm. It catalyses the reaction (S)-lactate + NAD(+) = pyruvate + NADH + H(+). It functions in the pathway fermentation; pyruvate fermentation to lactate; (S)-lactate from pyruvate: step 1/1. Allosterically activated by fructose 1,6-bisphosphate (FBP). Its function is as follows. Catalyzes the conversion of lactate to pyruvate. In Streptococcus pneumoniae (strain ATCC BAA-255 / R6), this protein is L-lactate dehydrogenase.